The primary structure comprises 504 residues: MEATGTWALLLALALLLLLTLALSGTRARGHLPPGPTPLPLLGNLLQLRPGALYSGLMRLSKKYGPVFTIYLGPWRPVVVLVGQEAVREALGGQAEEFSGRGTVAMLEGTFDGHGVFFSNGERWRQLRKFTMLALRDLGMGKREGEELIQAEARCLVETFQGTEGRPFDPSLLLAQATSNVVCSLLFGLRFSYEDKEFQAVVRAAGGTLLGVSSQGGQTYEMFSWFLRPLPGPHKQLLHHVSTLAAFTVRQVQQHQGNLDASGPARDLVDAFLLKMAQEEQNPGTEFTNKNMLMTVIYLLFAGTMTVSTTVGYTLLLLMKYPHVQKWVREELNRELGAGQAPSLGDRTRLPYTDAVLHEAQRLLALVPMGIPRTLMRTTRFRGYTLPQGTEVFPLLGSILHDPNIFKHPEEFNPDRFLDADGRFRKHEAFLPFSLGKRVCLGEGLAKAELFLFFTTILQAFSLESPCPPDTLSLKPTVSGLFNIPPAFQLQVRPTDLHSTTQTR.

A heme-binding site is contributed by Cys440.

Belongs to the cytochrome P450 family. Heme serves as cofactor. In terms of tissue distribution, expressed at higher levels in extrahepatic tissues including trachea, lung, stomach, small intestine, colon, kidney, breast, placenta and spleen. Expressed in peripheral blood leukocytes. Constitutively expressed in skin (at protein level).

It localises to the endoplasmic reticulum membrane. The protein localises to the microsome membrane. It catalyses the reaction all-trans-retinoate + reduced [NADPH--hemoprotein reductase] + O2 = all-trans-5,6-epoxyretinoate + oxidized [NADPH--hemoprotein reductase] + H2O + H(+). It carries out the reaction all-trans-retinoate + reduced [NADPH--hemoprotein reductase] + O2 = all-trans-4-hydroxyretinoate + oxidized [NADPH--hemoprotein reductase] + H2O + H(+). The catalysed reaction is (5S)-hydroperoxy-(6E,8Z,11Z,14Z)-eicosatetraenoate = 5-oxo-(6E,8Z,11Z,14Z)-eicosatetraenoate + H2O. The enzyme catalyses (12S)-hydroperoxy-(5Z,8Z,10E,14Z)-eicosatetraenoate = 12-oxo-(5Z,8Z,10E,14Z)-eicosatetraenoate + H2O. It catalyses the reaction (15S)-hydroperoxy-(5Z,8Z,11Z,13E)-eicosatetraenoate = 15-oxo-(5Z,8Z,11Z,13E)-eicosatetraenoate + H2O. It carries out the reaction prostaglandin H2 = thromboxane A2. The catalysed reaction is prostaglandin H2 = (12S)-hydroxy-(5Z,8E,10E)-heptadecatrienoate + malonaldehyde. The enzyme catalyses (13S)-hydroperoxy-(9Z,11E)-octadecadienoate = 13-oxo-(9Z,11E)-octadecadienoate + H2O. Its pathway is lipid metabolism; fatty acid metabolism. Functionally, a cytochrome P450 monooxygenase involved in the metabolism of retinoids and eicosanoids. In epidermis, may contribute to the oxidative metabolism of all-trans-retinoic acid. For this activity, uses molecular oxygen inserting one oxygen atom into a substrate, and reducing the second into a water molecule, with two electrons provided by NADPH via cytochrome P450 reductase (NADPH--hemoprotein reductase). Additionally, displays peroxidase and isomerase activities toward various oxygenated eicosanoids such as prostaglandin H2 (PGH2) and hydroperoxyeicosatetraenoates (HPETEs). Independently of cytochrome P450 reductase, NADPH, and O2, catalyzes the breakdown of PGH2 to hydroxyheptadecatrienoic acid (HHT) and malondialdehyde (MDA), which is known to act as a mediator of DNA damage. The polypeptide is Cytochrome P450 2S1 (Homo sapiens (Human)).